A 256-amino-acid polypeptide reads, in one-letter code: Dihydromonacolin L-[lovastatin nonaketide synthase] thioesterase (256 aa).

Active-site charge relay system residues include serine 122, aspartate 201, and histidine 229.

The protein belongs to the LovG family.

The enzyme catalyses dihydromonacolin L-[lovastatin nonaketide synthase] + H2O = holo-[lovastatin nonaketide synthase] + dihydromonacolin L carboxylate + H(+). Its pathway is polyketide biosynthesis; lovastatin biosynthesis. Its function is as follows. Esterase; part of the gene cluster that mediates the biosynthesis of lovastatin (also known as mevinolin, mevacor or monacolin K), a hypolipidemic inhibitor of (3S)-hydroxymethylglutaryl-coenzyme A (HMG-CoA) reductase (HMGR). The first step in the biosynthesis of lovastatin is the production of dihydromonacolin L acid by the lovastatin nonaketide synthase lovB and the trans-acting enoyl reductase lovC via condensation of one acetyl-CoA unit and 8 malonyl-CoA units. Dihydromonacolin L acid is released from lovB by the thioesterase lovG. Next, dihydromonacolin L acid is oxidized by the dihydromonacolin L monooxygenase lovA twice to form monacolin J acid. The 2-methylbutyrate moiety of lovastatin is synthesized by the lovastatin diketide synthase lovF via condensation of one acetyl-CoA unit and one malonyl-CoA unit. Finally, the covalent attachment of this moiety to monacolin J acid is catalyzed by the transesterase lovD to yield lovastatin. LovD has broad substrate specificity and can also convert monacolin J to simvastatin using alpha-dimethylbutanoyl-S-methyl-3-mercaptopropionate (DMB-S-MMP) as the thioester acyl donor, and can also catalyze the reverse reaction and function as hydrolase in vitro. LovD has much higher activity with LovF-bound 2-methylbutanoate than with free diketide substrates. In terms of biological role, esterase that catalyzes the release of covalently bound dihydromonacolin L from LovB during lovastatin biosynthesis. The chain is Dihydromonacolin L-[lovastatin nonaketide synthase] thioesterase from Aspergillus terreus.